Consider the following 338-residue polypeptide: Protein pelota homolog (338 aa).

It belongs to the eukaryotic release factor 1 family. Pelota subfamily. As to quaternary structure, monomer. A divalent metal cation is required as a cofactor.

The protein resides in the cytoplasm. Its function is as follows. May function in recognizing stalled ribosomes, interact with stem-loop structures in stalled mRNA molecules, and effect endonucleolytic cleavage of the mRNA. May play a role in the release non-functional ribosomes and degradation of damaged mRNAs. Has endoribonuclease activity. The chain is Protein pelota homolog from Caldivirga maquilingensis (strain ATCC 700844 / DSM 13496 / JCM 10307 / IC-167).